Here is a 25-residue protein sequence, read N- to C-terminus: Antimicrobial peptide THP3 (25 aa).

Its subcellular location is the secreted. Functionally, bactericidal activity; inhibits Staphylococcus aureus. The chain is Antimicrobial peptide THP3 from Meleagris gallopavo (Wild turkey).